The sequence spans 237 residues: Cysteine-rich venom protein ENH2 (237 aa).

Residues 1–18 (MIVFILLSLAAVLQQFVA) form the signal peptide. The region spanning 37–165 (VDMHNSFRRS…PYNYFYVCQY (129 aa)) is the SCP domain. 7 cysteine pairs are disulfide-bonded: cysteine 74–cysteine 152, cysteine 91–cysteine 166, cysteine 147–cysteine 163, cysteine 185–cysteine 192, cysteine 188–cysteine 197, cysteine 210–cysteine 228, and cysteine 219–cysteine 232. The ShKT domain occupies 201 to 237 (CPITNTFTNCDSLLQQNSCEDSYIKTNCGASCFGQDK).

The protein belongs to the CRISP family. In terms of tissue distribution, expressed by the venom gland.

The protein resides in the secreted. In terms of biological role, blocks contraction of smooth muscle elicited by high potassium-induced depolarization, but does not block caffeine-stimulated contraction. May target voltage-gated calcium channels on smooth muscle. This Pseudoferania polylepis (Macleay's water snake) protein is Cysteine-rich venom protein ENH2.